A 329-amino-acid polypeptide reads, in one-letter code: Biotin synthase (329 aa).

In terms of domain architecture, Radical SAM core spans 36–260; that stretch reads GEIQLCTLLS…VAVARITMPK (225 aa). Residues cysteine 51, cysteine 55, and cysteine 58 each contribute to the [4Fe-4S] cluster site. 4 residues coordinate [2Fe-2S] cluster: cysteine 95, cysteine 126, cysteine 186, and arginine 264.

The protein belongs to the radical SAM superfamily. Biotin synthase family. In terms of assembly, homodimer. The cofactor is [4Fe-4S] cluster. It depends on [2Fe-2S] cluster as a cofactor.

The enzyme catalyses (4R,5S)-dethiobiotin + (sulfur carrier)-SH + 2 reduced [2Fe-2S]-[ferredoxin] + 2 S-adenosyl-L-methionine = (sulfur carrier)-H + biotin + 2 5'-deoxyadenosine + 2 L-methionine + 2 oxidized [2Fe-2S]-[ferredoxin]. It participates in cofactor biosynthesis; biotin biosynthesis; biotin from 7,8-diaminononanoate: step 2/2. Its function is as follows. Catalyzes the conversion of dethiobiotin (DTB) to biotin by the insertion of a sulfur atom into dethiobiotin via a radical-based mechanism. The protein is Biotin synthase of Sphingopyxis alaskensis (strain DSM 13593 / LMG 18877 / RB2256) (Sphingomonas alaskensis).